A 200-amino-acid chain; its full sequence is Late embryogenesis abundant protein 19 (200 aa).

Disordered stretches follow at residues 1 to 145 (MASH…KTGS) and 172 to 200 (TEDE…ARDH). Composition is skewed to basic and acidic residues over residues 13 to 23 (GETKAHTEEKA), 30 to 42 (SKDK…DRAS), 53 to 81 (QDTK…KDKT), 88 to 97 (ARDKAAESKD), and 105 to 114 (EKTEQAKQKA). Residues 52 to 81 (GQDTKEATKEKAQAAKERASETAQAAKDKT) are a coiled coil. Composition is skewed to low complexity over residues 115 to 130 (AETA…ETAQ) and 186 to 200 (TSAT…ARDH).

Belongs to the LEA type 4 family.

Functionally, involved in response to stress. This Oryza sativa subsp. japonica (Rice) protein is Late embryogenesis abundant protein 19.